A 628-amino-acid chain; its full sequence is Kinesin-like protein KIN-10B (628 aa).

The 321-residue stretch at 20–340 (NVRVVLRVRP…VSLAARSRHI (321 aa)) folds into the Kinesin motor domain. 114-121 (GATGSGKT) is a binding site for ATP. The interval 496–519 (SPIDSNAKPNSAHGSSPFLKPMTP) is disordered. Polar residues predominate over residues 498-509 (IDSNAKPNSAHG).

It belongs to the TRAFAC class myosin-kinesin ATPase superfamily. Kinesin family. KIN-10 subfamily.

The polypeptide is Kinesin-like protein KIN-10B (Arabidopsis thaliana (Mouse-ear cress)).